Here is a 216-residue protein sequence, read N- to C-terminus: Glycerol uptake facilitator protein-like 6 (216 aa).

2 helical membrane-spanning segments follow: residues 5 to 25 and 30 to 50; these read LAEF…VVIA and LAIG…FGGI. The short motif at 56 to 58 is the NPA 1 element; the sequence is NPA. Helical transmembrane passes span 72-92, 114-134, and 147-167; these read ADAI…SAAV, IGSG…LMVI, and FAGL…LNLT. The NPA 2 signature appears at 172–174; sequence NPA. The chain crosses the membrane as a helical span at residues 191 to 213; it reads LWVYILAPEVGAILAAFCARVMG.

It belongs to the MIP/aquaporin (TC 1.A.8) family.

It localises to the cell membrane. Functionally, probable transporter that facilitates the transmembrane diffusion of an unknown substrate. Is not permeable to water, dihydroxyacetone, glycerol, urea, H(2)O(2) and D/L-lactic acid. The chain is Glycerol uptake facilitator protein-like 6 from Lactiplantibacillus plantarum (strain ATCC BAA-793 / NCIMB 8826 / WCFS1) (Lactobacillus plantarum).